Reading from the N-terminus, the 961-residue chain is Outer capsid protein VP2 (961 aa).

Belongs to the orbivirus VP2 family.

The protein resides in the virion. Functionally, the VP2 protein is one of the two proteins (with VP5) which constitute the virus particle outer capsid. It is the major target of the host immunogenic response. Responsible for viral attachment to target host cell, probably by binding to sialic acid. This attachment induces virion internalization predominantly through clathrin-dependent endocytosis. The chain is Outer capsid protein VP2 (Segment-2) from Antilocapra americana (Pronghorn).